The sequence spans 369 residues: tRNA 2-selenouridine synthase (369 aa).

The region spanning 15–138 (MLSGHPMMDV…MRQYLIEVID (124 aa)) is the Rhodanese domain. Cysteine 98 (S-selanylcysteine intermediate) is an active-site residue.

The protein belongs to the SelU family. As to quaternary structure, monomer.

It carries out the reaction 5-methylaminomethyl-2-thiouridine(34) in tRNA + selenophosphate + (2E)-geranyl diphosphate + H2O + H(+) = 5-methylaminomethyl-2-selenouridine(34) in tRNA + (2E)-thiogeraniol + phosphate + diphosphate. It catalyses the reaction 5-methylaminomethyl-2-thiouridine(34) in tRNA + (2E)-geranyl diphosphate = 5-methylaminomethyl-S-(2E)-geranyl-thiouridine(34) in tRNA + diphosphate. The catalysed reaction is 5-methylaminomethyl-S-(2E)-geranyl-thiouridine(34) in tRNA + selenophosphate + H(+) = 5-methylaminomethyl-2-(Se-phospho)selenouridine(34) in tRNA + (2E)-thiogeraniol. The enzyme catalyses 5-methylaminomethyl-2-(Se-phospho)selenouridine(34) in tRNA + H2O = 5-methylaminomethyl-2-selenouridine(34) in tRNA + phosphate. Its function is as follows. Involved in the post-transcriptional modification of the uridine at the wobble position (U34) of tRNA(Lys), tRNA(Glu) and tRNA(Gln). Catalyzes the conversion of 2-thiouridine (S2U-RNA) to 2-selenouridine (Se2U-RNA). Acts in a two-step process involving geranylation of 2-thiouridine (S2U) to S-geranyl-2-thiouridine (geS2U) and subsequent selenation of the latter derivative to 2-selenouridine (Se2U) in the tRNA chain. In Shewanella sediminis (strain HAW-EB3), this protein is tRNA 2-selenouridine synthase.